Reading from the N-terminus, the 511-residue chain is V-type proton ATPase subunit B, brain isoform (511 aa).

Arginine 400 contributes to the ATP binding site.

It belongs to the ATPase alpha/beta chains family. As to quaternary structure, V-ATPase is a heteromultimeric enzyme made up of two complexes: the ATP-hydrolytic V1 complex and the proton translocation V0 complex. The V1 complex consists of three catalytic AB heterodimers that form a heterohexamer, three peripheral stalks each consisting of EG heterodimers, one central rotor including subunits D and F, and the regulatory subunits C and H. The proton translocation complex V0 consists of the proton transport subunit a, a ring of proteolipid subunits c9c'', rotary subunit d, subunits e and f, and the accessory subunits ATP6AP1/Ac45 and ATP6AP2/PRR. In terms of tissue distribution, expressed in brain (at protein level). Expressed in all tissues tested, but highest in brain and in adrenal medulla.

It is found in the apical cell membrane. Its subcellular location is the melanosome. The protein localises to the cytoplasm. It localises to the cytoplasmic vesicle. The protein resides in the clathrin-coated vesicle membrane. It is found in the secretory vesicle. Its subcellular location is the synaptic vesicle membrane. Functionally, non-catalytic subunit of the V1 complex of vacuolar(H+)-ATPase (V-ATPase), a multisubunit enzyme composed of a peripheral complex (V1) that hydrolyzes ATP and a membrane integral complex (V0) that translocates protons. V-ATPase is responsible for acidifying and maintaining the pH of intracellular compartments and in some cell types, is targeted to the plasma membrane, where it is responsible for acidifying the extracellular environment. In renal intercalated cells, can partially compensate the lack of ATP6V1B1 and mediate secretion of protons (H+) into the urine under base-line conditions but not in conditions of acid load. The polypeptide is V-type proton ATPase subunit B, brain isoform (ATP6V1B2) (Bos taurus (Bovine)).